The primary structure comprises 367 residues: Quinolinate synthase (367 aa).

His46 and Ser63 together coordinate iminosuccinate. [4Fe-4S] cluster is bound at residue Cys110. Residues 141–143 (YVN) and Ser162 each bind iminosuccinate. Cys229 contributes to the [4Fe-4S] cluster binding site. Residues 255–257 (HPE) and Thr272 contribute to the iminosuccinate site. Position 319 (Cys319) interacts with [4Fe-4S] cluster.

Belongs to the quinolinate synthase family. Type 3 subfamily. The cofactor is [4Fe-4S] cluster.

The protein resides in the cytoplasm. The catalysed reaction is iminosuccinate + dihydroxyacetone phosphate = quinolinate + phosphate + 2 H2O + H(+). Its pathway is cofactor biosynthesis; NAD(+) biosynthesis; quinolinate from iminoaspartate: step 1/1. Catalyzes the condensation of iminoaspartate with dihydroxyacetone phosphate to form quinolinate. This is Quinolinate synthase from Bacillus velezensis (strain DSM 23117 / BGSC 10A6 / LMG 26770 / FZB42) (Bacillus amyloliquefaciens subsp. plantarum).